An 86-amino-acid polypeptide reads, in one-letter code: Large ribosomal subunit protein bL27 (86 aa).

A disordered region spans residues 1–21; the sequence is MAHHKGGGSSRNGKDSNPQYL.

It belongs to the bacterial ribosomal protein bL27 family.

The protein is Large ribosomal subunit protein bL27 of Coprothermobacter proteolyticus (strain ATCC 35245 / DSM 5265 / OCM 4 / BT).